The following is a 437-amino-acid chain: Nuclear hormone receptor family member nhr-28 (437 aa).

The segment at residues 5–80 (KSPCSVCGEA…VGMRKSAVQR (76 aa)) is a DNA-binding region (nuclear receptor). NR C4-type zinc fingers lie at residues 8-28 (CSVC…CRAC) and 44-68 (CRAM…FTKC). One can recognise an NR LBD domain in the interval 115–376 (YEETGMPTLS…ETFYELVSGR (262 aa)).

This sequence belongs to the nuclear hormone receptor family. As to expression, expressed in the pharynx, intestine and hypodermis.

The protein localises to the nucleus. Its function is as follows. Orphan nuclear receptor. This Caenorhabditis elegans protein is Nuclear hormone receptor family member nhr-28 (nhr-28).